Consider the following 232-residue polypeptide: Ribose-5-phosphate isomerase A (232 aa).

Residues 28 to 31 (TGST), 83 to 86 (DGAD), and 96 to 99 (KGGG) each bind substrate. Catalysis depends on glutamate 105, which acts as the Proton acceptor. Lysine 123 is a binding site for substrate.

Belongs to the ribose 5-phosphate isomerase family. As to quaternary structure, homodimer.

The catalysed reaction is aldehydo-D-ribose 5-phosphate = D-ribulose 5-phosphate. Its pathway is carbohydrate degradation; pentose phosphate pathway; D-ribose 5-phosphate from D-ribulose 5-phosphate (non-oxidative stage): step 1/1. In terms of biological role, catalyzes the reversible conversion of ribose-5-phosphate to ribulose 5-phosphate. This Rhizobium leguminosarum bv. trifolii (strain WSM2304) protein is Ribose-5-phosphate isomerase A.